Here is a 397-residue protein sequence, read N- to C-terminus: Bifunctional arginine demethylase and lysyl-hydroxylase psr-1 (397 aa).

The 165-residue stretch at Arg146–Arg310 folds into the JmjC domain. Position 189 (Thr189) interacts with substrate. Fe cation-binding residues include His192 and Asp194. Residue Asn202 participates in 2-oxoglutarate binding. Lys209 provides a ligand contact to substrate. Fe cation is bound at residue His278. Position 290 (Thr290) interacts with 2-oxoglutarate. Polar residues predominate over residues Ser334–Asn344. Residues Ser334–Val383 are disordered. Low complexity predominate over residues Asp345–Asp358.

Belongs to the JMJD6 family. In terms of assembly, interacts with ced-5 and ced-12. Fe(2+) is required as a cofactor.

It is found in the nucleus. In terms of biological role, dioxygenase that can both act as a histone arginine demethylase and a lysyl-hydroxylase. The polypeptide is Bifunctional arginine demethylase and lysyl-hydroxylase psr-1 (psr-1) (Caenorhabditis briggsae).